A 363-amino-acid polypeptide reads, in one-letter code: Probable cinnamyl alcohol dehydrogenase 6 (363 aa).

Cysteine 51 lines the Zn(2+) pocket. Residue serine 53 participates in NADP(+) binding. Histidine 73, glutamate 74, cysteine 104, cysteine 107, cysteine 110, cysteine 118, and cysteine 167 together coordinate Zn(2+). Residues serine 171, 192–197 (GLGGLG), 215–220 (SSTTGK), threonine 255, glycine 279, and 302–304 (SGI) each bind NADP(+).

It belongs to the zinc-containing alcohol dehydrogenase family. Homodimer. Zn(2+) is required as a cofactor. In terms of tissue distribution, expressed in the primary and lateral roots, and root caps. Expressed in the hypocotyl, cotyledon veins and hydathodes. In stems, expressed in the vascular cambium, interfascicular cambium and developing xylem. Expressed in the style, anthers, stamen filaments, vascular tissues of sepals, stigmatic regions in flowers, and abscission and style regions of siliques.

It catalyses the reaction (E)-cinnamyl alcohol + NADP(+) = (E)-cinnamaldehyde + NADPH + H(+). The enzyme catalyses (E)-coniferol + NADP(+) = (E)-coniferaldehyde + NADPH + H(+). The catalysed reaction is (E)-sinapyl alcohol + NADP(+) = (E)-sinapaldehyde + NADPH + H(+). It carries out the reaction (E)-4-coumaroyl alcohol + NADP(+) = (E)-4-coumaraldehyde + NADPH + H(+). It catalyses the reaction (E)-caffeyl alcohol + NADP(+) = (E)-caffeyl aldehyde + NADPH + H(+). The protein operates within aromatic compound metabolism; phenylpropanoid biosynthesis. Its function is as follows. Involved in lignin biosynthesis. Catalyzes the final step specific for the production of lignin monomers. Catalyzes the NADPH-dependent reduction of coniferaldehyde, 5-hydroxyconiferaldehyde, sinapaldehyde, 4-coumaraldehyde and caffeyl aldehyde to their respective alcohols. This is Probable cinnamyl alcohol dehydrogenase 6 (CAD6) from Arabidopsis thaliana (Mouse-ear cress).